Here is a 114-residue protein sequence, read N- to C-terminus: Large ribosomal subunit protein bL19 (114 aa).

It belongs to the bacterial ribosomal protein bL19 family.

In terms of biological role, this protein is located at the 30S-50S ribosomal subunit interface and may play a role in the structure and function of the aminoacyl-tRNA binding site. The sequence is that of Large ribosomal subunit protein bL19 from Bacillus cytotoxicus (strain DSM 22905 / CIP 110041 / 391-98 / NVH 391-98).